We begin with the raw amino-acid sequence, 89 residues long: Small ribosomal subunit protein uS15 (89 aa).

It belongs to the universal ribosomal protein uS15 family. In terms of assembly, part of the 30S ribosomal subunit. Forms a bridge to the 50S subunit in the 70S ribosome, contacting the 23S rRNA.

In terms of biological role, one of the primary rRNA binding proteins, it binds directly to 16S rRNA where it helps nucleate assembly of the platform of the 30S subunit by binding and bridging several RNA helices of the 16S rRNA. Forms an intersubunit bridge (bridge B4) with the 23S rRNA of the 50S subunit in the ribosome. The chain is Small ribosomal subunit protein uS15 from Corynebacterium aurimucosum (strain ATCC 700975 / DSM 44827 / CIP 107346 / CN-1) (Corynebacterium nigricans).